An 84-amino-acid polypeptide reads, in one-letter code: Exodeoxyribonuclease 7 small subunit (84 aa).

Belongs to the XseB family. In terms of assembly, heterooligomer composed of large and small subunits.

It localises to the cytoplasm. The enzyme catalyses Exonucleolytic cleavage in either 5'- to 3'- or 3'- to 5'-direction to yield nucleoside 5'-phosphates.. Functionally, bidirectionally degrades single-stranded DNA into large acid-insoluble oligonucleotides, which are then degraded further into small acid-soluble oligonucleotides. The polypeptide is Exodeoxyribonuclease 7 small subunit (Haemophilus influenzae (strain ATCC 51907 / DSM 11121 / KW20 / Rd)).